The following is a 259-amino-acid chain: Ribosomal RNA small subunit methyltransferase J (259 aa).

Residues Arg101–Asp102, Glu117–Arg118, Ser153–Ser154, and Asp176 each bind S-adenosyl-L-methionine.

This sequence belongs to the methyltransferase superfamily. RsmJ family.

The protein resides in the cytoplasm. It catalyses the reaction guanosine(1516) in 16S rRNA + S-adenosyl-L-methionine = N(2)-methylguanosine(1516) in 16S rRNA + S-adenosyl-L-homocysteine + H(+). Its function is as follows. Specifically methylates the guanosine in position 1516 of 16S rRNA. The chain is Ribosomal RNA small subunit methyltransferase J from Aliivibrio fischeri (strain ATCC 700601 / ES114) (Vibrio fischeri).